The following is a 458-amino-acid chain: Probable ECA polymerase (458 aa).

Helical transmembrane passes span 3 to 23 (LAQF…VLTL), 37 to 57 (VFFS…TCLL), 65 to 85 (VVPV…YAIY), 112 to 132 (THLT…IFFL), 154 to 174 (GVAL…VYFL), 180 to 200 (AWFF…VIVG), 201 to 221 (GTRA…IVRG), 222 to 242 (WISL…MFWL), 340 to 360 (LVVM…GMII), 377 to 397 (YKAA…IVLA), and 409 to 429 (VFFC…YWLF).

Belongs to the WzyE family. As to quaternary structure, probably part of a complex composed of WzxE, WzyE and WzzE.

It localises to the cell inner membrane. The protein operates within bacterial outer membrane biogenesis; enterobacterial common antigen biosynthesis. Functionally, probably involved in the polymerization of enterobacterial common antigen (ECA) trisaccharide repeat units. The protein is Probable ECA polymerase of Serratia proteamaculans (strain 568).